We begin with the raw amino-acid sequence, 272 residues long: Streptomycin 3''-kinase (272 aa).

Asp190 acts as the Proton acceptor in catalysis.

Belongs to the aminoglycoside phosphotransferase family.

It catalyses the reaction streptomycin + ATP = streptomycin 3''-phosphate + ADP + H(+). Functionally, the aminoglycoside phosphotransferases achieve inactivation of their antibiotic substrates by phosphorylation. This Streptomyces griseus protein is Streptomycin 3''-kinase (aphE).